The sequence spans 356 residues: Pyrimidine monooxygenase RutA (356 aa).

FMN contacts are provided by residues 49-50 (IK), Asn115, Glu124, 140-141 (RY), and Ser190.

It belongs to the NtaA/SnaA/DszA monooxygenase family. RutA subfamily.

The enzyme catalyses uracil + FMNH2 + NADH + O2 = (Z)-3-ureidoacrylate + FMN + NAD(+) + H2O + H(+). The catalysed reaction is thymine + FMNH2 + NADH + O2 = (Z)-2-methylureidoacrylate + FMN + NAD(+) + H2O + H(+). Its function is as follows. Catalyzes the pyrimidine ring opening between N-3 and C-4 by an unusual flavin hydroperoxide-catalyzed mechanism, adding oxygen atoms in the process to yield ureidoacrylate peracid, that immediately reacts with FMN forming ureidoacrylate and FMN-N(5)-oxide. The FMN-N(5)-oxide reacts spontaneously with NADH to produce FMN. Requires the flavin reductase RutF to regenerate FMN in vivo. This chain is Pyrimidine monooxygenase RutA, found in Haliangium ochraceum (strain DSM 14365 / JCM 11303 / SMP-2).